A 476-amino-acid chain; its full sequence is GTPase Der (476 aa).

EngA-type G domains are found at residues 3–167 (FTVA…GEDM) and 205–380 (LRVA…KTWN). GTP contacts are provided by residues 9 to 16 (GRPNVGKS), 56 to 60 (DTAGL), 119 to 122 (NKSE), 211 to 218 (GRPNAGKS), 258 to 262 (DTAGM), and 323 to 326 (NKWD). The 85-residue stretch at 381–465 (RRISTAKLNR…PIRVHYRGSD (85 aa)) folds into the KH-like domain.

This sequence belongs to the TRAFAC class TrmE-Era-EngA-EngB-Septin-like GTPase superfamily. EngA (Der) GTPase family. In terms of assembly, associates with the 50S ribosomal subunit.

Its function is as follows. GTPase that plays an essential role in the late steps of ribosome biogenesis. The polypeptide is GTPase Der (Agrobacterium fabrum (strain C58 / ATCC 33970) (Agrobacterium tumefaciens (strain C58))).